Here is a 136-residue protein sequence, read N- to C-terminus: Small ribosomal subunit protein uS9 (136 aa).

Positions Ser-97–Arg-136 are disordered. The segment covering Pro-98–Ala-116 has biased composition (basic and acidic residues). The segment covering Lys-117 to Arg-136 has biased composition (basic residues).

The protein belongs to the universal ribosomal protein uS9 family.

The sequence is that of Small ribosomal subunit protein uS9 from Prochlorococcus marinus (strain AS9601).